A 281-amino-acid polypeptide reads, in one-letter code: Elongation factor 1-delta (281 aa).

Position 2 is an N-acetylalanine (A2). N6-acetyllysine is present on K17. Phosphoserine is present on residues S37, S44, S60, S86, and S106. Residues 80-115 (LVVRIASLEVENQSLRGVVQELQQAISKLEARLNVL) form a leucine-zipper region. N6-acetyllysine is present on K107. Residue K117 is modified to N6-acetyllysine; alternate. K117 bears the N6-succinyllysine; alternate mark. Residues 118–172 (SSPGHRATAPQTQHVSPMRQVEPPAKKPATPAEDDEDDDIDLFGSDNEEEDKEAA) form a disordered region. S119 carries the phosphoserine modification. T129 bears the Phosphothreonine mark. Position 133 is a phosphoserine (S133). The residue at position 147 (T147) is a Phosphothreonine. Positions 149-169 (AEDDEDDDIDLFGSDNEEEDK) are enriched in acidic residues. Phosphoserine; by CK2 is present on S162. The tract at residues 173-281 (QLREERLRQY…SVDIAAFNKI (109 aa)) is catalytic (GEF).

The protein belongs to the EF-1-beta/EF-1-delta family. As to quaternary structure, EF-1 is composed of 4 subunits: alpha, beta, delta isoform 1, and gamma. Isoform 2 interacts with HSF1 and NFE2L2.

It is found in the nucleus. EF-1-beta and EF-1-delta stimulate the exchange of GDP bound to EF-1-alpha to GTP, regenerating EF-1-alpha for another round of transfer of aminoacyl-tRNAs to the ribosome. Its function is as follows. Regulates induction of heat-shock-responsive genes through association with heat shock transcription factors and direct DNA-binding at heat shock promoter elements (HSE). The sequence is that of Elongation factor 1-delta (EEF1D) from Macaca fascicularis (Crab-eating macaque).